A 582-amino-acid polypeptide reads, in one-letter code: V-type ATP synthase alpha chain (582 aa).

Residue 231 to 238 participates in ATP binding; the sequence is GPFGSGKT.

The protein belongs to the ATPase alpha/beta chains family.

The catalysed reaction is ATP + H2O + 4 H(+)(in) = ADP + phosphate + 5 H(+)(out). In terms of biological role, produces ATP from ADP in the presence of a proton gradient across the membrane. The V-type alpha chain is a catalytic subunit. In Deinococcus geothermalis (strain DSM 11300 / CIP 105573 / AG-3a), this protein is V-type ATP synthase alpha chain.